Consider the following 148-residue polypeptide: uncharacterized protein (148 aa).

The segment covering 65–79 has biased composition (low complexity); that stretch reads VDSTPSVDSTGSTSD. A disordered region spans residues 65–85; it reads VDSTPSVDSTGSTSDVVDDRG.

This is an uncharacterized protein from Saccharomyces cerevisiae (strain ATCC 204508 / S288c) (Baker's yeast).